The chain runs to 660 residues: WD repeat-containing protein 48 homolog (660 aa).

WD repeat units lie at residues 23–78, 84–120, 123–162, 174–213, 216–255, 258–297, 300–341, and 362–401; these read MHRS…RDLH, HHTD…CMST, THRD…KLTA, GNKD…KLMK, GHTD…CISS, CHSE…TAQL, IEDA…ISVE, and PGAA…KVCD.

This sequence belongs to the WD repeat WDR48 family.

Regulator of deubiquitinating complexes. Activates deubiquitination by increasing the catalytic turnover without increasing the affinity of deubiquitinating enzymes for the substrate. The polypeptide is WD repeat-containing protein 48 homolog (Brugia malayi (Filarial nematode worm)).